Here is a 262-residue protein sequence, read N- to C-terminus: Acyl-[acyl-carrier-protein]--UDP-N-acetylglucosamine O-acyltransferase (262 aa).

It belongs to the transferase hexapeptide repeat family. LpxA subfamily. As to quaternary structure, homotrimer.

Its subcellular location is the cytoplasm. The catalysed reaction is a (3R)-hydroxyacyl-[ACP] + UDP-N-acetyl-alpha-D-glucosamine = a UDP-3-O-[(3R)-3-hydroxyacyl]-N-acetyl-alpha-D-glucosamine + holo-[ACP]. Its pathway is glycolipid biosynthesis; lipid IV(A) biosynthesis; lipid IV(A) from (3R)-3-hydroxytetradecanoyl-[acyl-carrier-protein] and UDP-N-acetyl-alpha-D-glucosamine: step 1/6. In terms of biological role, involved in the biosynthesis of lipid A, a phosphorylated glycolipid that anchors the lipopolysaccharide to the outer membrane of the cell. The chain is Acyl-[acyl-carrier-protein]--UDP-N-acetylglucosamine O-acyltransferase from Haemophilus influenzae (strain ATCC 51907 / DSM 11121 / KW20 / Rd).